The following is a 62-amino-acid chain: Large ribosomal subunit protein bL28 (62 aa).

Belongs to the bacterial ribosomal protein bL28 family.

This is Large ribosomal subunit protein bL28 from Aster yellows witches'-broom phytoplasma (strain AYWB).